Consider the following 221-residue polypeptide: Cytidylate kinase (221 aa).

11-19 (GPTASGKGT) is an ATP binding site.

This sequence belongs to the cytidylate kinase family. Type 1 subfamily.

Its subcellular location is the cytoplasm. The catalysed reaction is CMP + ATP = CDP + ADP. It catalyses the reaction dCMP + ATP = dCDP + ADP. In Cupriavidus pinatubonensis (strain JMP 134 / LMG 1197) (Cupriavidus necator (strain JMP 134)), this protein is Cytidylate kinase.